The primary structure comprises 345 residues: Gibberellin receptor GID1A (345 aa).

Ala-2 carries the N-acetylalanine modification. An Involved in the stabilization of the negatively charged intermediate by the formation of the oxyanion hole motif is present at residues 113–115 (HGG). Residues 115-116 (GS), Tyr-127, and Ser-191 contribute to the gibberellin A4 site. Residues Ser-116, Tyr-127, Ser-191, and Phe-238 each coordinate gibberellin A3. The active site involves Ser-191. Asp-289 is a catalytic residue. Position 320 (Gly-320) interacts with gibberellin A4. Gibberellin A3 is bound at residue Gly-320.

It belongs to the 'GDXG' lipolytic enzyme family. In terms of assembly, interacts (via N-terminus) with the DELLA proteins GAI, RGA, RGL1, RGL2 and RGL3 (via N-terminus) in a GA-dependent manner. Widely expressed.

The protein resides in the nucleus. Functions as a soluble gibberellin (GA) receptor. GA is an essential hormone that regulates growth and development in plants. Binds with high affinity the biologically active gibberellin GA4, but has no affinity for the biologically inactive GAs. In response to GA, interacts with specific DELLA proteins, known as repressors of GA-induced growth, and targets them for degradation via proteasome. Seems to be required for GA signaling that controls root growth, seed germination, stem elongation and flower development. Partially redundant with GID1B and GID1C. This chain is Gibberellin receptor GID1A (GID1A), found in Arabidopsis thaliana (Mouse-ear cress).